The following is a 37-amino-acid chain: Large ribosomal subunit protein bL36 (37 aa).

It belongs to the bacterial ribosomal protein bL36 family.

This Clostridioides difficile (strain 630) (Peptoclostridium difficile) protein is Large ribosomal subunit protein bL36.